A 359-amino-acid polypeptide reads, in one-letter code: Histidinol-phosphate aminotransferase (359 aa).

At K217 the chain carries N6-(pyridoxal phosphate)lysine.

Belongs to the class-II pyridoxal-phosphate-dependent aminotransferase family. Histidinol-phosphate aminotransferase subfamily. As to quaternary structure, homodimer. Pyridoxal 5'-phosphate serves as cofactor.

It carries out the reaction L-histidinol phosphate + 2-oxoglutarate = 3-(imidazol-4-yl)-2-oxopropyl phosphate + L-glutamate. It participates in amino-acid biosynthesis; L-histidine biosynthesis; L-histidine from 5-phospho-alpha-D-ribose 1-diphosphate: step 7/9. The protein is Histidinol-phosphate aminotransferase of Salmonella paratyphi A (strain ATCC 9150 / SARB42).